Here is a 258-residue protein sequence, read N- to C-terminus: UPF0246 protein Sfri_2896 (258 aa).

The protein belongs to the UPF0246 family.

The chain is UPF0246 protein Sfri_2896 from Shewanella frigidimarina (strain NCIMB 400).